The sequence spans 685 residues: MLPYNQDFYNEDEALKDDHCEGAGNVSNPPTLDEAIKRSQDFLLSQQYPEGYWWAELEGNPTITSHTVILYKILGIEDEYPMDKMEKYLRRMQCIHGGWELFYGDGGQLSVTIESYVALRLLNVPPTDPALKKALKFIIDKGGVXKSRMFTKICLALLGCFDWRGIPSLPPWVMLLPGWFLSSIYETACWARGCVVPLIVVFDKKPVFKVSPEVSFDELYAEGREHACKTLPFCGDWTSHFFIAVDRVFKMMERLGVVPFQQWGIREAEKWLLERQEDTGDFLGVYPPMFYSVVCMKTLGYEVTDPVVRRALLSFKKFSIERADECSVQSSLSPVWDTALVVRSLVESGLPPDHPALQRAGEWLLQKQITKHGDWSFKNQSGVAGGWAFQFFNRWYPDLDDSAVVVMALDCLKLPNEDVKNGAITRCLKWISSMQCKGGGWAAFDKDNHQHWINSTPFSDLKAMVDPSTTDISARVLEMVGRLKLHGTSFDEAHFLPPESIARGLVYLRREQENEGCWFGRWGVNYIYGTCGALVALSLVAPMTHEEEIARGARWLVQVQNMHGKKINGPQDGGWGETCFSYNDPALKGQGDVSTASQTAWALQGLLAAGDALGKYEVESIGHGVQYLLSTQRKDGSWHESQFTGGGFPIHFYLRYHFYAQHFTLSSLARYRTRLQASKIKPPIP.

PFTB repeat units lie at residues 82–123 and 265–308; these read MDKM…RLLN and IREA…DPVV. Asp-400 (proton donor) is an active-site residue. PFTB repeat units follow at residues 424-465 and 621-672; these read ITRC…KAMV and IGHG…ARYR.

Belongs to the terpene cyclase/mutase family.

It catalyses the reaction squalene = dammara-20,24-diene. In terms of biological role, squalene cyclase producing the tetracyclic triterpene dammaradiene. This Dryopteris crassirhizoma (Thick stemmed wood fern) protein is Dammaradiene synthase (DCD).